The primary structure comprises 218 residues: Recombination protein RecR (218 aa).

Residues 56–71 (CRICCNISREEVCRIC) form a C4-type zinc finger. The Toprim domain maps to 79 to 195 (STICVVEEPK…VVSRLASGMP (117 aa)).

The protein belongs to the RecR family.

Functionally, may play a role in DNA repair. It seems to be involved in an RecBC-independent recombinational process of DNA repair. It may act with RecF and RecO. In Corynebacterium diphtheriae (strain ATCC 700971 / NCTC 13129 / Biotype gravis), this protein is Recombination protein RecR.